A 303-amino-acid chain; its full sequence is ASC1-like protein (303 aa).

Transmembrane regions (helical) follow at residues Y19–L39, C81–F101, A127–E147, F153–I173, Y212–S232, and Y255–I275. In terms of domain architecture, TLC spans R72–Q284.

Its subcellular location is the endoplasmic reticulum membrane. Functionally, mediates resistance to sphinganine-analog mycotoxins (SAMs) by restoring the sphingolipid biosynthesis. Could salvage the transport of GPI-anchored proteins from the endoplasmic reticulum to the Golgi apparatus in ceramides-depleted cells after SAM exposure. The sequence is that of ASC1-like protein from Solanum lycopersicum (Tomato).